A 103-amino-acid chain; its full sequence is MHVKKGDKVMVISGKDKGKQGVILAAFPKKDRVIVEGVNMVKKHSKPTQANPQGGILNQEAPIHVSNVMPLDPKTGEVTRVGYKVENGKKVRIAKKSGQVLDN.

It belongs to the universal ribosomal protein uL24 family. Part of the 50S ribosomal subunit.

Functionally, one of two assembly initiator proteins, it binds directly to the 5'-end of the 23S rRNA, where it nucleates assembly of the 50S subunit. In terms of biological role, one of the proteins that surrounds the polypeptide exit tunnel on the outside of the subunit. The protein is Large ribosomal subunit protein uL24 of Bacillus licheniformis (strain ATCC 14580 / DSM 13 / JCM 2505 / CCUG 7422 / NBRC 12200 / NCIMB 9375 / NCTC 10341 / NRRL NRS-1264 / Gibson 46).